The following is a 360-amino-acid chain: Nucleoporin SEH1 (360 aa).

WD repeat units follow at residues 10-49 (DHKD…DWHC), 55-96 (THSG…SNDK), 111-152 (DSRT…NLSQ), 160-210 (SCKL…RKYA), 217-258 (TVTD…KELT), and 276-315 (NHNS…NWKC). Residue lysine 12 forms a Glycyl lysine isopeptide (Lys-Gly) (interchain with G-Cter in SUMO2) linkage. Serine 179 and serine 190 each carry phosphoserine. The span at 324-354 (SPVNGSSQQGTSNPSLGSNIPSLQNSLNGSS) shows a compositional bias: polar residues. The disordered stretch occupies residues 324-360 (SPVNGSSQQGTSNPSLGSNIPSLQNSLNGSSAGRKHS).

The protein belongs to the WD repeat SEC13 family. Component of the Nup107-160 subcomplex of the nuclear pore complex (NPC). The Nup107-160 subcomplex includes NUP160, NUP133, NUP107, NUP98, NUP85, NUP43, NUP37, SEH1 and SEC13. The SEH1 subunit appears to be only weakly associated with the Nup107-160 subcomplex. Component of the GATOR2 subcomplex, composed of MIOS, SEC13, SEH1L, WDR24 and WDR59. The GATOR2 complex interacts with CASTOR1 and CASTOR2; the interaction is negatively regulated by arginine. The GATOR2 complex interacts with SESN1, SESN2 and SESN3; the interaction is negatively regulated by amino acids. SESN1, SESN2 and SESN3 convey leucine availability via direct interaction with SEH1L and WDR24.

It localises to the chromosome. It is found in the centromere. The protein resides in the kinetochore. The protein localises to the nucleus. Its subcellular location is the nuclear pore complex. It localises to the lysosome membrane. Its activity is regulated as follows. The GATOR2 complex is negatively regulated by the upstream amino acid sensors CASTOR1 and SESN2, which sequester the GATOR2 complex in absence of amino acids. In the presence of abundant amino acids, GATOR2 is released from CASTOR1 and SESN2 and activated. Component of the Nup107-160 subcomplex of the nuclear pore complex (NPC). The Nup107-160 subcomplex is required for the assembly of a functional NPC. The Nup107-160 subcomplex is also required for normal kinetochore microtubule attachment, mitotic progression and chromosome segregation. This subunit plays a role in recruitment of the Nup107-160 subcomplex to the kinetochore. Its function is as follows. As a component of the GATOR2 complex, functions as an activator of the amino acid-sensing branch of the mTORC1 signaling pathway. The GATOR2 complex indirectly activates mTORC1 through the inhibition of the GATOR1 subcomplex. GATOR2 probably acts as an E3 ubiquitin-protein ligase toward GATOR1. In the presence of abundant amino acids, the GATOR2 complex mediates ubiquitination of the NPRL2 core component of the GATOR1 complex, leading to GATOR1 inactivation. In the absence of amino acids, GATOR2 is inhibited, activating the GATOR1 complex. Within the GATOR2 complex, SEC13 and SEH1L are required to stabilize the complex. This Pongo abelii (Sumatran orangutan) protein is Nucleoporin SEH1 (SEH1L).